The primary structure comprises 419 residues: Probable pectate lyase C (419 aa).

The signal sequence occupies residues 1–19 (MRLTPSLISCLSLLHFTSA). Residues Asn48, Asn164, and Asn201 are each glycosylated (N-linked (GlcNAc...) asparagine). Arg204 is an active-site residue. The EF-hand domain maps to 261-296 (NENFHAYVETNYYDSDKDGTLNGSELGVDSTNYGGM). Ca(2+) contacts are provided by Asp274, Asp276, Asp278, and Thr280. Asn282 carries N-linked (GlcNAc...) asparagine glycosylation. Glu285 serves as a coordination point for Ca(2+). Positions 350-395 (ALISDEADMGGAGDLDQGTTPTDTDGDGIPDDAEAELGTDPNTADS) are disordered. Residues 363–372 (DLDQGTTPTD) are compositionally biased toward low complexity. The segment covering 373–386 (TDGDGIPDDAEAEL) has biased composition (acidic residues).

Belongs to the polysaccharide lyase 1 family. It depends on Ca(2+) as a cofactor.

The protein localises to the secreted. It catalyses the reaction Eliminative cleavage of (1-&gt;4)-alpha-D-galacturonan to give oligosaccharides with 4-deoxy-alpha-D-galact-4-enuronosyl groups at their non-reducing ends.. Functionally, pectinolytic enzyme consist of four classes of enzymes: pectin lyase, polygalacturonase, pectin methylesterase and rhamnogalacturonase. Among pectinolytic enzymes, pectin lyase is the most important in depolymerization of pectin, since it cleaves internal glycosidic bonds of highly methylated pectins. Favors pectate, the anion, over pectin, the methyl ester. This chain is Probable pectate lyase C (plyC), found in Aspergillus flavus (strain ATCC 200026 / FGSC A1120 / IAM 13836 / NRRL 3357 / JCM 12722 / SRRC 167).